The chain runs to 367 residues: MYPESTTGSPARLSLRQTGSPGMIYSTRYGSPKRQLQFYRNLGKSGLRVSCLGLGTWVTFGGQITDEMAEHLMTLAYDNGINLFDTAEVYAAGKAEVVLGNIIKKKGWRRSSLVITTKIFWGGKAETERGLSRKHIIEGLKASLERLQLEYVDVVFANRPDPNTPMEETVRAMTHVINQGMAMYWGTSRWSSMEIMEAYSVARQFNLIPPICEQAEYHMFQREKVEVQLPELFHKIGVGAMTWSPLACGIVSGKYDSGIPPYSRASLKGYQWLKDKILSEEGRRQQAKLKELQAIAERLGCTLPQLAIAWCLRNEGVSSVLLGASNAEQLMENIGAIQVLPKLSSSIVHEIDSILGNKPYSKKDYRS.

Phosphoserine occurs at positions 9, 14, and 20. At arginine 28 the chain carries Asymmetric dimethylarginine; alternate. Omega-N-methylarginine; alternate is present on arginine 28. Residue serine 31 is modified to Phosphoserine. Positions 56, 57, 63, and 85 each coordinate NADP(+). The active-site Proton donor/acceptor is tyrosine 90. Serine 112 is modified (phosphoserine). An N6-acetyllysine modification is found at lysine 124. Residues asparagine 158, serine 188, arginine 189, glutamine 214, tryptophan 243, serine 244, proline 245, leucine 246, alanine 247, cysteine 248, lysine 254, tyrosine 262, arginine 264, glycine 323, serine 325, glutamine 329, glutamate 332, and asparagine 333 each contribute to the NADP(+) site.

Belongs to the shaker potassium channel beta subunit family. Homotetramer. Interaction with tetrameric potassium channel alpha subunits gives rise to a heterooctamer. Identified in potassium channel complexes containing KCNA1, KCNA2, KCNA4, KCNA5, KCNA6, KCNAB1, KCNAB2 and KCND3. Interacts (in unphosphorylated form) with MAPRE1. Forms a ternary complex with SQSTM1 and PRKCZ. Post-translationally, phosphorylated by PRKCZ; may be regulated by incorporation in a complex composed of PRKCZ and SQSTM1. Detected in brain. Detected at basket cell terminals in cerebellum and in the juxtaparanodal region of nodes of Ranvier (at protein level). Strongest expression in brain and eye. Highest levels in brain detected in brainstem and diencephalon. Strong expression also detected in lung and heart. Moderate expression in kidney, T-lymphocytes and skeletal muscle.

Its subcellular location is the cytoplasm. It localises to the membrane. The protein localises to the cell membrane. The protein resides in the cell projection. It is found in the axon. Its subcellular location is the synapse. It localises to the synaptosome. The protein localises to the cytoskeleton. The catalysed reaction is hydroxyacetone + NADP(+) = methylglyoxal + NADPH + H(+). It carries out the reaction (E)-4-oxonon-2-en-1-ol + NADP(+) = (E)-4-oxonon-2-enal + NADPH + H(+). Regulatory subunit of the voltage-gated potassium (Kv) Shaker channel family. Shaker channels are composed of pore-forming and potassium-conducting alpha subunits and of regulatory beta subunits. The beta-2/KCNAB2 subunit promotes potassium channel closure via a mechanism that does not involve physical obstruction of the channel pore. Promotes the inactivation of Kv1.4/KCNA4 and Kv1.5/KCNA5 alpha subunit-containing channels. Displays nicotinamide adenine dinucleotide phosphate (NADPH)-dependent aldoketoreductase activity by catalyzing the NADPH-dependent reduction of a wide range of aldehyde and ketone substrates. Substrate specificity includes methylglyoxal, 9,10-phenanthrenequinone, prostaglandin J2, 4-nitrobenzaldehyde, 4-nitroacetophenone and 4-oxo-trans-2-nonenal (in vitro, no physiological substrate identified yet). The binding of oxidized and reduced nucleotide cofactors alters Kv channel gating and may contribute to dynamic fine tuning of cell excitability. Contributes to the regulation of nerve signaling, and prevents neuronal hyperexcitability. In Mus musculus (Mouse), this protein is Voltage-gated potassium channel subunit beta-2.